The chain runs to 107 residues: UPF0060 membrane protein M446_5886 (107 aa).

Transmembrane regions (helical) follow at residues 4-24, 31-51, 59-79, and 85-105; these read LLAYALAALAEIAGCFAIWAW, PLWLGPGLASLILFAVLLTRV, AYAAYGGVYVAASLLWLWAAE, and RWDLGGAALCLAGSAVVLLGP.

Belongs to the UPF0060 family.

The protein resides in the cell inner membrane. This Methylobacterium sp. (strain 4-46) protein is UPF0060 membrane protein M446_5886.